Reading from the N-terminus, the 279-residue chain is Thymidylate synthase (279 aa).

Arg-29 lines the dUMP pocket. A (6R)-5,10-methylene-5,6,7,8-tetrahydrofolate-binding site is contributed by His-59. DUMP is bound at residue 134–135; it reads RR. Residue Cys-154 is the Nucleophile of the active site. Residues 181–184, Asn-192, and 222–224 each bind dUMP; these read RSAD and HIY. Asp-184 lines the (6R)-5,10-methylene-5,6,7,8-tetrahydrofolate pocket. Ala-278 contacts (6R)-5,10-methylene-5,6,7,8-tetrahydrofolate.

It belongs to the thymidylate synthase family. Bacterial-type ThyA subfamily. In terms of assembly, homodimer.

Its subcellular location is the cytoplasm. It carries out the reaction dUMP + (6R)-5,10-methylene-5,6,7,8-tetrahydrofolate = 7,8-dihydrofolate + dTMP. Its pathway is pyrimidine metabolism; dTTP biosynthesis. In terms of biological role, catalyzes the reductive methylation of 2'-deoxyuridine-5'-monophosphate (dUMP) to 2'-deoxythymidine-5'-monophosphate (dTMP) while utilizing 5,10-methylenetetrahydrofolate (mTHF) as the methyl donor and reductant in the reaction, yielding dihydrofolate (DHF) as a by-product. This enzymatic reaction provides an intracellular de novo source of dTMP, an essential precursor for DNA biosynthesis. The sequence is that of Thymidylate synthase from Paracidovorax citrulli (strain AAC00-1) (Acidovorax citrulli).